The sequence spans 943 residues: Translation initiation factor IF-2 (943 aa).

Disordered stretches follow at residues 96 to 229 (FIKR…ERRR) and 243 to 352 (AAPK…QRQQ). Positions 104-116 (DAPSDAAESAPSA) are enriched in low complexity. Composition is skewed to basic and acidic residues over residues 120-163 (ELVR…EERA) and 171-229 (AEKK…ERRR). Residues 278–293 (ATGSGTGARAAAPSAP) are compositionally biased toward low complexity. The segment covering 313–323 (TTKKKEIKTRG) has biased composition (basic and acidic residues). One can recognise a tr-type G domain in the interval 443 to 612 (SRAPVVTVMG…LLQAEVLELK (170 aa)). A G1 region spans residues 452-459 (GHVDHGKT). 452–459 (GHVDHGKT) serves as a coordination point for GTP. Positions 477 to 481 (GITQH) are G2. The G3 stretch occupies residues 498–501 (DTPG). Residues 498–502 (DTPGH) and 552–555 (TKAD) contribute to the GTP site. The tract at residues 552–555 (TKAD) is G4. The G5 stretch occupies residues 588-590 (SSK).

Belongs to the TRAFAC class translation factor GTPase superfamily. Classic translation factor GTPase family. IF-2 subfamily.

It localises to the cytoplasm. Functionally, one of the essential components for the initiation of protein synthesis. Protects formylmethionyl-tRNA from spontaneous hydrolysis and promotes its binding to the 30S ribosomal subunits. Also involved in the hydrolysis of GTP during the formation of the 70S ribosomal complex. In Acidovorax sp. (strain JS42), this protein is Translation initiation factor IF-2.